Here is a 101-residue protein sequence, read N- to C-terminus: Large ribosomal subunit protein bL25 (101 aa).

The protein belongs to the bacterial ribosomal protein bL25 family. As to quaternary structure, part of the 50S ribosomal subunit; part of the 5S rRNA/L5/L18/L25 subcomplex. Contacts the 5S rRNA. Binds to the 5S rRNA independently of L5 and L18.

This is one of the proteins that binds to the 5S RNA in the ribosome where it forms part of the central protuberance. The sequence is that of Large ribosomal subunit protein bL25 from Thermosynechococcus vestitus (strain NIES-2133 / IAM M-273 / BP-1).